An 89-amino-acid polypeptide reads, in one-letter code: MALTQERKNEIIAEYRVHDTDTGSPEVQIAVLTAEINSLNEHVRVHKKDHHSYRGLMKMVGHRRNLLTYLRKKDVQRYRELIKRLGLRR.

The protein belongs to the universal ribosomal protein uS15 family. As to quaternary structure, part of the 30S ribosomal subunit. Forms a bridge to the 50S subunit in the 70S ribosome, contacting the 23S rRNA.

Functionally, one of the primary rRNA binding proteins, it binds directly to 16S rRNA where it helps nucleate assembly of the platform of the 30S subunit by binding and bridging several RNA helices of the 16S rRNA. Forms an intersubunit bridge (bridge B4) with the 23S rRNA of the 50S subunit in the ribosome. The protein is Small ribosomal subunit protein uS15 of Listeria innocua serovar 6a (strain ATCC BAA-680 / CLIP 11262).